We begin with the raw amino-acid sequence, 206 residues long: uncharacterized protein (206 aa).

The N-terminal stretch at 1-22 (MPKLRLIGLTLLALSATAVSHA) is a signal peptide. One can recognise an SH3b domain in the interval 23–89 (EETRYVSDEL…IPLKQLSTEP (67 aa)). A helical transmembrane segment spans residues 169–191 (IIMQWFMYGGGVLGLGLLLGLVL).

The protein to H.influenzae HI_1605.

The protein resides in the membrane. This is an uncharacterized protein from Escherichia coli O157:H7.